The chain runs to 148 residues: Small ribosomal subunit protein eS6 (148 aa).

It belongs to the eukaryotic ribosomal protein eS6 family.

This Pyrobaculum neutrophilum (strain DSM 2338 / JCM 9278 / NBRC 100436 / V24Sta) (Thermoproteus neutrophilus) protein is Small ribosomal subunit protein eS6.